Consider the following 352-residue polypeptide: MLYLTNYTDYMFFSYISVRAGFAFFIALFLSLYFMPKFIKWAQNKKANQPIYEYAPQSHQAKSHTPTMGGLIFIFATIVASLLCADLNNFYVIIGILCLVLFCTIGLVDDLGKILKKDNHAGLSPRMKLLSQFIASFICVFFLYIMGINTEFYLPFYKYALFDGGIFMLALWILVIISSSNAVNLTDGLDGLATVPSIFSLLSLSAFLYLSGNAIYSSYLFLPKIQGLGELVVLSAALVGALMGFLWYNCYPAQVFMGDSGSLSIGAFLGYLGIVSKNEILLLLIGFVFVLETISVILQVGSFKIFNKRVFKMAPIHHHFEKIGWVENKIIVRFWMIALLANIIALISIKLR.

The next 10 helical transmembrane spans lie at 10-30 (YMFFSYISVRAGFAFFIALFL), 67-87 (TMGGLIFIFATIVASLLCADL), 88-108 (NNFYVIIGILCLVLFCTIGLV), 129-149 (LLSQFIASFICVFFLYIMGIN), 159-179 (YALFDGGIFMLALWILVIISS), 191-211 (GLATVPSIFSLLSLSAFLYLS), 227-247 (GLGELVVLSAALVGALMGFLW), 255-275 (VFMGDSGSLSIGAFLGYLGIV), 280-300 (ILLLLIGFVFVLETISVILQV), and 329-349 (KIIVRFWMIALLANIIALISI).

Belongs to the glycosyltransferase 4 family. MraY subfamily. Mg(2+) is required as a cofactor.

Its subcellular location is the cell inner membrane. The catalysed reaction is UDP-N-acetyl-alpha-D-muramoyl-L-alanyl-gamma-D-glutamyl-meso-2,6-diaminopimeloyl-D-alanyl-D-alanine + di-trans,octa-cis-undecaprenyl phosphate = di-trans,octa-cis-undecaprenyl diphospho-N-acetyl-alpha-D-muramoyl-L-alanyl-D-glutamyl-meso-2,6-diaminopimeloyl-D-alanyl-D-alanine + UMP. The protein operates within cell wall biogenesis; peptidoglycan biosynthesis. Its function is as follows. Catalyzes the initial step of the lipid cycle reactions in the biosynthesis of the cell wall peptidoglycan: transfers peptidoglycan precursor phospho-MurNAc-pentapeptide from UDP-MurNAc-pentapeptide onto the lipid carrier undecaprenyl phosphate, yielding undecaprenyl-pyrophosphoryl-MurNAc-pentapeptide, known as lipid I. The polypeptide is Phospho-N-acetylmuramoyl-pentapeptide-transferase (Campylobacter lari (strain RM2100 / D67 / ATCC BAA-1060)).